Here is a 358-residue protein sequence, read N- to C-terminus: Putative ankyrin repeat protein FPV242 (358 aa).

ANK repeat units lie at residues 6–35 (NNYRKLRKAIINEDIEEIKYIIEKDPNMIV), 40–69 (NNHTLLHIAIMYRKVNAVKVLLDKGDNLVY), 91–118 (TRRNKISNALEKINNHKKIIEALVDKGV), 119–147 (ELTGLEIALSCKNIWLIKFLIEKGISVEY), 149–177 (GFFPVGVNYNTIDIDICKVLLENKIDINK), 180–209 (CGETLVRYAIRSSDLNLLKYLISKGADIEK), 214–243 (EQDPNIIEAVEKGNLGIVEYLIDNGISIDT), 248–277 (NHKPAIYYAILAGHYNMVDLLLRRGANPFI), 280–312 (EGNTSLISVATQAKRNRLKLINLLLKYGVRLPG), and 316–345 (YYIQPILLDYSYETYNIIHILLEHGLRITS).

This chain is Putative ankyrin repeat protein FPV242, found in Fowlpox virus (strain NVSL) (FPV).